The primary structure comprises 115 residues: NADH-ubiquinone oxidoreductase chain 3 (115 aa).

Helical transmembrane passes span 3–23 (FVLI…ITFW), 55–75 (FFLV…LLPL), and 84–104 (LPLM…SLAY).

This sequence belongs to the complex I subunit 3 family. In terms of assembly, core subunit of respiratory chain NADH dehydrogenase (Complex I) which is composed of 45 different subunits. Interacts with TMEM186. Interacts with TMEM242.

The protein resides in the mitochondrion inner membrane. The catalysed reaction is a ubiquinone + NADH + 5 H(+)(in) = a ubiquinol + NAD(+) + 4 H(+)(out). Its function is as follows. Core subunit of the mitochondrial membrane respiratory chain NADH dehydrogenase (Complex I) which catalyzes electron transfer from NADH through the respiratory chain, using ubiquinone as an electron acceptor. Essential for the catalytic activity of complex I. The chain is NADH-ubiquinone oxidoreductase chain 3 from Pan troglodytes (Chimpanzee).